The sequence spans 411 residues: LIM domain-binding protein 1 (411 aa).

Ser-2 bears the N-acetylserine mark. Phosphothreonine is present on Thr-61. Residues Ser-265 and Ser-302 each carry the phosphoserine modification. Disordered stretches follow at residues 284 to 330 (PPAE…TFAL) and 367 to 411 (DAAN…QASQ). The span at 302–318 (SGGSTMSSGGGNTNNSN) shows a compositional bias: low complexity. The 40-residue stretch at 336–375 (DVMVVGEPTLMGGEFGDEDERLITRLENTQFDAANGIDDE) folds into the LIM interaction domain (LID) domain.

The protein belongs to the LDB family. As to quaternary structure, interacts with ESR1. Forms homodimers and heterodimers. Interacts with and activates LHX1/LIM1. Interacts with the LIM domains of ISL1 and LMO2. Can assemble in a complex with LMO2 and TAL1/SCL but does not interact with TAL1/SCL directly. Strongly interacts with the LIM2 domain of LMX1A and more weakly with the LIM1 domain. Homodimerization is not required for, and does not effect, LMX1A-binding. Component of a nuclear TAL-1 complex composed at least of CBFA2T3, LDB1, TAL1 and TCF3. Interacts with LHX6 and LHX9. At neuronal promoters, forms a complex with LHX3 involved in the specification of interneurons, in motor neurons, it is displaced by ISL1 to form a ternary complex in which ISL1 contacts both LHX3 and LDB1. Interacts with SLK; leading to negatively regulate SLK kinase activity. Interacts with YWHAZ. Interacts with PRDM1/BLIMP1. Interacts with LMO4. Interacts with RLIM/RNF12; the interaction inhibits the ubiquitination of LMO proteins. Ubiquitinated by RLIM/RNF12, leading to its degradation by the proteasome. In terms of tissue distribution, expressed in multiple adult tissues including heart, brain, liver, kidney, testis, lung and muscle, with expression highest in the pituitary gland and skin.

The protein resides in the nucleus. Its function is as follows. Binds to the LIM domain of a wide variety of LIM domain-containing transcription factors. May regulate the transcriptional activity of LIM-containing proteins by determining specific partner interactions. Plays a role in the development of interneurons and motor neurons in cooperation with LHX3 and ISL1. Acts synergistically with LHX1/LIM1 in axis formation and activation of gene expression. Acts with LMO2 in the regulation of red blood cell development, maintaining erythroid precursors in an immature state. The polypeptide is LIM domain-binding protein 1 (Ldb1) (Mus musculus (Mouse)).